Reading from the N-terminus, the 49-residue chain is MRVNITLEHKESGERLYLTSKNKRNTPDRLQLKKYSPKLRKHVTFTEVK.

Belongs to the bacterial ribosomal protein bL33 family.

This Streptococcus pyogenes serotype M18 (strain MGAS8232) protein is Large ribosomal subunit protein bL33.